A 102-amino-acid polypeptide reads, in one-letter code: Monothiol glutaredoxin-S4 (102 aa).

Residues 1-101 enclose the Glutaredoxin domain; the sequence is MDKLQKMISE…PMLKRVGALW (101 aa). Cysteine 21 is a [2Fe-2S] cluster binding site. The Responsive for interaction with TGA factors motif lies at 99–102; that stretch reads ALWL.

This sequence belongs to the glutaredoxin family. CC-type subfamily.

The protein resides in the cytoplasm. It is found in the nucleus. May only reduce GSH-thiol disulfides, but not protein disulfides. The chain is Monothiol glutaredoxin-S4 (GRXS4) from Arabidopsis thaliana (Mouse-ear cress).